Consider the following 673-residue polypeptide: Vasorin (673 aa).

The N-terminal stretch at 1–24 is a signal peptide; the sequence is MHSRSCLPPLLLLLLVLLGSGVQG. The region spanning 25 to 53 is the LRRNT domain; it reads CPSGCQCNQPQTVFCTARQGTTVPRDVPP. Residues 25–576 are Extracellular-facing; that stretch reads CPSGCQCNQP…VTQAREGNLP (552 aa). LRR repeat units follow at residues 54–75, 78–99, 102–123, 126–147, 150–170, 171–192, 194–215, 218–239, 241–265, and 266–288; these read DTVG…CFAG, GLQL…IFQP, NLSN…TFRG, RLER…AFDA, RLLE…LHLP, RLLL…ILDT, NVEA…LFGR, NLHD…IQGL, GLTR…AGLT, and ALQE…SSLF. N-linked (GlcNAc...) asparagine glycans are attached at residues Asn-102 and Asn-118. An N-linked (GlcNAc...) asparagine glycan is attached at Asn-274. An LRRCT domain is found at 299–352; sequence NPFNCLCPLSWFGPWVRENHVVLASPEETRCHFPPKNAGRLLLDLDYADFGCPV. The tract at residues 369 to 389 is disordered; that stretch reads PTLSTSSQAPTWPSLTEPTTQ. A compositionally biased stretch (polar residues) spans 370 to 389; it reads TLSTSSQAPTWPSLTEPTTQ. One can recognise an EGF-like domain in the interval 406-443; sequence QPQDCPASICLNGGSCRLGARHHWECLCPEGFIGLYCE. Cystine bridges form between Cys-410/Cys-421, Cys-415/Cys-431, and Cys-433/Cys-442. A Fibronectin type-III domain is found at 463–559; sequence PLLPLSIEPV…ACGEANTSQA (97 aa). N-linked (GlcNAc...) asparagine glycans are attached at residues Asn-501, Asn-529, and Asn-555. A helical transmembrane segment spans residues 577 to 597; the sequence is LLIAPALAAVLLAVLAAAGAA. The Cytoplasmic segment spans residues 598 to 673; it reads YCVRRARATS…QGVLPAKHYI (76 aa). Residues 608–648 form a disordered region; it reads TAQDKGQVGPGTGPLELEGVKAPLEPGSKATEGGGEALSGG.

Interacts with TGFB1, TGFB2 and TGFB3. N-glycosylated.

Its subcellular location is the membrane. Its function is as follows. May act as an inhibitor of TGF-beta signaling. This is Vasorin (Vasn) from Mus musculus (Mouse).